Consider the following 170-residue polypeptide: Peptide deformylase (170 aa).

Residues cysteine 91 and histidine 133 each coordinate Fe cation. Residue glutamate 134 is part of the active site. Histidine 137 is a binding site for Fe cation.

The protein belongs to the polypeptide deformylase family. Fe(2+) serves as cofactor.

The catalysed reaction is N-terminal N-formyl-L-methionyl-[peptide] + H2O = N-terminal L-methionyl-[peptide] + formate. Functionally, removes the formyl group from the N-terminal Met of newly synthesized proteins. Requires at least a dipeptide for an efficient rate of reaction. N-terminal L-methionine is a prerequisite for activity but the enzyme has broad specificity at other positions. The chain is Peptide deformylase from Histophilus somni (strain 129Pt) (Haemophilus somnus).